The following is a 438-amino-acid chain: Aminopeptidase E (438 aa).

Active-site residues include cysteine 70, histidine 362, and asparagine 383.

It belongs to the peptidase C1 family.

Its subcellular location is the cytoplasm. Its function is as follows. Can hydrolyze internal peptide bonds in Met-enkephalin and bradykinin; however, hydrolysis of alpha-, beta-, and kappa-caseins is not detected. In Lactobacillus helveticus (Lactobacillus suntoryeus), this protein is Aminopeptidase E (pepE).